A 221-amino-acid chain; its full sequence is Zingipain-1 (221 aa).

Intrachain disulfides connect C24/C65, C58/C98, and C155/C206. C27 is an active-site residue. N-linked (GlcNAc...) asparagine glycans are attached at residues N95 and N156. Active-site residues include H161 and N181.

It belongs to the peptidase C1 family.

It carries out the reaction Preferential cleavage of peptides with a proline residue at the P2 position.. In terms of biological role, cysteine proteinase with a high level of diversity in substrate specificity, an amino acid bearing a proline residue at the P2 position is preferred. In Zingiber officinale (Ginger), this protein is Zingipain-1.